A 199-amino-acid polypeptide reads, in one-letter code: Holliday junction resolvase RecU (199 aa).

Mg(2+)-binding residues include Thr-82, Asp-84, Glu-97, and Gln-116.

It belongs to the RecU family. The cofactor is Mg(2+).

It localises to the cytoplasm. The catalysed reaction is Endonucleolytic cleavage at a junction such as a reciprocal single-stranded crossover between two homologous DNA duplexes (Holliday junction).. In terms of biological role, endonuclease that resolves Holliday junction intermediates in genetic recombination. Cleaves mobile four-strand junctions by introducing symmetrical nicks in paired strands. Promotes annealing of linear ssDNA with homologous dsDNA. Required for DNA repair, homologous recombination and chromosome segregation. The sequence is that of Holliday junction resolvase RecU from Streptococcus agalactiae serotype Ia (strain ATCC 27591 / A909 / CDC SS700).